Consider the following 400-residue polypeptide: Elongation factor Tu (400 aa).

One can recognise a tr-type G domain in the interval 10 to 210; sequence KPHVNVGTIG…ALDSYIPEPV (201 aa). Positions 19–26 are G1; sequence GHVDHGKT. 19-26 provides a ligand contact to GTP; sequence GHVDHGKT. T26 is a binding site for Mg(2+). The tract at residues 66-70 is G2; sequence ILTIA. The segment at 87 to 90 is G3; that stretch reads DCPG. Residues 87 to 91 and 142 to 145 each bind GTP; these read DCPGH and NKCD. The interval 142 to 145 is G4; that stretch reads NKCD. The interval 180–182 is G5; it reads SAI.

It belongs to the TRAFAC class translation factor GTPase superfamily. Classic translation factor GTPase family. EF-Tu/EF-1A subfamily. As to quaternary structure, monomer.

The protein resides in the cytoplasm. The catalysed reaction is GTP + H2O = GDP + phosphate + H(+). In terms of biological role, GTP hydrolase that promotes the GTP-dependent binding of aminoacyl-tRNA to the A-site of ribosomes during protein biosynthesis. The sequence is that of Elongation factor Tu from Gemmatimonas aurantiaca (strain DSM 14586 / JCM 11422 / NBRC 100505 / T-27).